Consider the following 99-residue polypeptide: UPF0751 protein BCE_A0020 (99 aa).

The protein belongs to the UPF0751 family.

In Bacillus cereus (strain ATCC 10987 / NRS 248), this protein is UPF0751 protein BCE_A0020.